Reading from the N-terminus, the 105-residue chain is Large ribosomal subunit protein uL24 (105 aa).

Belongs to the universal ribosomal protein uL24 family. Part of the 50S ribosomal subunit.

In terms of biological role, one of two assembly initiator proteins, it binds directly to the 5'-end of the 23S rRNA, where it nucleates assembly of the 50S subunit. Functionally, one of the proteins that surrounds the polypeptide exit tunnel on the outside of the subunit. The chain is Large ribosomal subunit protein uL24 from Tolumonas auensis (strain DSM 9187 / NBRC 110442 / TA 4).